A 72-amino-acid chain; its full sequence is Translation initiation factor IF-1 (72 aa).

The S1-like domain maps to 1–72 (MARDDVIEVD…DKGRITFRYK (72 aa)).

It belongs to the IF-1 family. Component of the 30S ribosomal translation pre-initiation complex which assembles on the 30S ribosome in the order IF-2 and IF-3, IF-1 and N-formylmethionyl-tRNA(fMet); mRNA recruitment can occur at any time during PIC assembly.

It localises to the cytoplasm. In terms of biological role, one of the essential components for the initiation of protein synthesis. Stabilizes the binding of IF-2 and IF-3 on the 30S subunit to which N-formylmethionyl-tRNA(fMet) subsequently binds. Helps modulate mRNA selection, yielding the 30S pre-initiation complex (PIC). Upon addition of the 50S ribosomal subunit IF-1, IF-2 and IF-3 are released leaving the mature 70S translation initiation complex. The chain is Translation initiation factor IF-1 from Helicobacter pylori (strain HPAG1).